Consider the following 246-residue polypeptide: tRNA (guanine-N(7)-)-methyltransferase (246 aa).

Positions 1–26 are disordered; that stretch reads MSDSSSSSENAPATPESPGRPPRGIK. S-adenosyl-L-methionine contacts are provided by Glu74, Glu99, Asp126, and Asp149. Asp149 is a catalytic residue. Residues Lys153, Asp185, and 224 to 227 contribute to the substrate site; that span reads TKFE.

Belongs to the class I-like SAM-binding methyltransferase superfamily. TrmB family.

It carries out the reaction guanosine(46) in tRNA + S-adenosyl-L-methionine = N(7)-methylguanosine(46) in tRNA + S-adenosyl-L-homocysteine. The protein operates within tRNA modification; N(7)-methylguanine-tRNA biosynthesis. In terms of biological role, catalyzes the formation of N(7)-methylguanine at position 46 (m7G46) in tRNA. This Chromohalobacter salexigens (strain ATCC BAA-138 / DSM 3043 / CIP 106854 / NCIMB 13768 / 1H11) protein is tRNA (guanine-N(7)-)-methyltransferase.